A 340-amino-acid chain; its full sequence is tRNA N6-adenosine threonylcarbamoyltransferase (340 aa).

Fe cation-binding residues include His115 and His119. Residues Val138 to Gly142, Asp171, Gly184, Asp188, and Asn278 contribute to the substrate site. Position 306 (Asp306) interacts with Fe cation.

The protein belongs to the KAE1 / TsaD family. It depends on Fe(2+) as a cofactor.

It localises to the cytoplasm. It carries out the reaction L-threonylcarbamoyladenylate + adenosine(37) in tRNA = N(6)-L-threonylcarbamoyladenosine(37) in tRNA + AMP + H(+). Its function is as follows. Required for the formation of a threonylcarbamoyl group on adenosine at position 37 (t(6)A37) in tRNAs that read codons beginning with adenine. Is involved in the transfer of the threonylcarbamoyl moiety of threonylcarbamoyl-AMP (TC-AMP) to the N6 group of A37, together with TsaE and TsaB. TsaD likely plays a direct catalytic role in this reaction. The polypeptide is tRNA N6-adenosine threonylcarbamoyltransferase (Clostridium botulinum (strain 657 / Type Ba4)).